The following is a 78-amino-acid chain: Large ribosomal subunit protein bL28 (78 aa).

The segment at M1–N23 is disordered. Positions R11–N22 are enriched in polar residues.

It belongs to the bacterial ribosomal protein bL28 family.

This Stenotrophomonas maltophilia (strain R551-3) protein is Large ribosomal subunit protein bL28.